The sequence spans 316 residues: MMGLTEGVFLILSGTQFTLGILVNCFIELVNGSSWFKTKRMSLSDFIITTLALLRIILLCIILTDSFLIEFSPNTHDSGIIMQIIDVSWTFTNHLSIWLATCLGVLYCLKIASFSHPTFLWLKWRVSRVMVWMLLGALLLSCGSTASLINEFKLYSVFRGIEATRNVTEHFRKKRSEYYLIHVLGTLWYLPPLIVSLASYSLLIFSLGRHTRQMLQNGTSSRDPTTEAHKRAIRIILSFFFLFLLYFLAFLIASFGNFLPKTKMAKMIGEVMTMFYPAGHSFILILGNSKLKQTFVVMLRCESGHLKPGSKGPIFS.

Over 1–6 (MMGLTE) the chain is Extracellular. Residues 7–27 (GVFLILSGTQFTLGILVNCFI) form a helical membrane-spanning segment. The Cytoplasmic segment spans residues 28–42 (ELVNGSSWFKTKRMS). The helical transmembrane segment at 43–63 (LSDFIITTLALLRIILLCIIL) threads the bilayer. The Extracellular portion of the chain corresponds to 64–94 (TDSFLIEFSPNTHDSGIIMQIIDVSWTFTNH). A helical membrane pass occupies residues 95 to 115 (LSIWLATCLGVLYCLKIASFS). Residues 116–128 (HPTFLWLKWRVSR) are Cytoplasmic-facing. A helical transmembrane segment spans residues 129–149 (VMVWMLLGALLLSCGSTASLI). The Extracellular segment spans residues 150 to 186 (NEFKLYSVFRGIEATRNVTEHFRKKRSEYYLIHVLGT). An N-linked (GlcNAc...) asparagine glycan is attached at asparagine 166. A helical membrane pass occupies residues 187-207 (LWYLPPLIVSLASYSLLIFSL). Topologically, residues 208–234 (GRHTRQMLQNGTSSRDPTTEAHKRAIR) are cytoplasmic. A helical transmembrane segment spans residues 235–255 (IILSFFFLFLLYFLAFLIASF). Topologically, residues 256–266 (GNFLPKTKMAK) are extracellular. The helical transmembrane segment at 267–287 (MIGEVMTMFYPAGHSFILILG) threads the bilayer. The Cytoplasmic segment spans residues 288–316 (NSKLKQTFVVMLRCESGHLKPGSKGPIFS).

Belongs to the G-protein coupled receptor T2R family. In terms of tissue distribution, expressed in subsets of taste receptor cells of the tongue and palate epithelium and exclusively in gustducin-positive cells. Expressed in the antrum and fundus (part of the stomach), duodenum and in gastric endocrine cells.

The protein localises to the membrane. In terms of biological role, gustducin-coupled receptor implicated in the perception of bitter compounds in the oral cavity and the gastrointestinal tract. Signals through PLCB2 and the calcium-regulated cation channel TRPM5. The chain is Taste receptor type 2 member 3 (TAS2R3) from Homo sapiens (Human).